The chain runs to 226 residues: Transmembrane emp24 domain-containing protein 5 (226 aa).

A signal peptide spans 1–24; it reads MGDKTWLPFPVVLLAALLLPRAAG. Topologically, residues 25 to 193 are lumenal; that stretch reads FTPSLDSDFT…IQESNFDRVN (169 aa). The GOLD domain maps to 42–123; that stretch reads KECFYQPMPL…EKVIFFELIL (82 aa). Residues 194–214 form a helical membrane-spanning segment; that stretch reads FWSMVNLVVMVVVSAIQVYML. At 215-226 the chain is on the cytoplasmic side; that stretch reads KSLFEDKRKSRT. A Mediates export from ER motif is present at residues 217–218; it reads LF.

Belongs to the EMP24/GP25L family. Interacts with TMED9 and TMED10.

It is found in the endoplasmic reticulum membrane. The protein localises to the golgi apparatus. Its subcellular location is the cis-Golgi network membrane. The protein resides in the endoplasmic reticulum-Golgi intermediate compartment membrane. Functionally, potential role in vesicular protein trafficking, mainly in the early secretory pathway. Required for the maintenance of the Golgi apparatus; involved in protein exchange between Golgi stacks during assembly. Probably not required for COPI-vesicle-mediated retrograde transport. This is Transmembrane emp24 domain-containing protein 5 (TMED5) from Bos taurus (Bovine).